The sequence spans 136 residues: Protein scalloped (136 aa).

It localises to the nucleus. In terms of biological role, probable transcription factor that function in the regulation of cell-specific gene expression during drosophila development, particularly in the differentiation of the nervous system. This Junonia coenia (Peacock butterfly) protein is Protein scalloped (SD).